The primary structure comprises 203 residues: Endo-type membrane-bound lytic murein transglycosylase A (203 aa).

A signal peptide spans 1–15 (MKLRWFAFLIVLLAG). Residue Cys16 is the site of N-palmitoyl cysteine attachment. Cys16 carries S-diacylglycerol cysteine lipidation.

The protein belongs to the transglycosylase Slt family.

The protein resides in the cell outer membrane. It carries out the reaction Endolytic cleavage of the (1-&gt;4)-beta-glycosidic linkage between N-acetylmuramic acid (MurNAc) and N-acetylglucosamine (GlcNAc) residues in peptidoglycan with concomitant formation of a 1,6-anhydrobond in the MurNAc residue.. Murein-degrading enzyme. May play a role in recycling of muropeptides during cell elongation and/or cell division. Preferentially cleaves at a distance of more than two disaccharide units from the ends of the glycan chain. This chain is Endo-type membrane-bound lytic murein transglycosylase A, found in Shigella dysenteriae serotype 1 (strain Sd197).